Consider the following 272-residue polypeptide: Shikimate dehydrogenase (NADP(+)) (272 aa).

Shikimate contacts are provided by residues 14–16 and T61; that span reads SLS. Catalysis depends on K65, which acts as the Proton acceptor. Shikimate is bound at residue D102. NADP(+) contacts are provided by residues 127-131, 151-156, and L215; these read GAGGA and NRTPSK. Position 217 (Y217) interacts with shikimate. G239 is an NADP(+) binding site.

This sequence belongs to the shikimate dehydrogenase family. In terms of assembly, homodimer.

It carries out the reaction shikimate + NADP(+) = 3-dehydroshikimate + NADPH + H(+). It functions in the pathway metabolic intermediate biosynthesis; chorismate biosynthesis; chorismate from D-erythrose 4-phosphate and phosphoenolpyruvate: step 4/7. Involved in the biosynthesis of the chorismate, which leads to the biosynthesis of aromatic amino acids. Catalyzes the reversible NADPH linked reduction of 3-dehydroshikimate (DHSA) to yield shikimate (SA). The polypeptide is Shikimate dehydrogenase (NADP(+)) (Coxiella burnetii (strain CbuK_Q154) (Coxiella burnetii (strain Q154))).